Here is a 66-residue protein sequence, read N- to C-terminus: Disk-determining factor A (66 aa).

Its function is as follows. Involved in cell-shape determination. Required for the formation of disks. The sequence is that of Disk-determining factor A from Haloferax volcanii (strain ATCC 29605 / DSM 3757 / JCM 8879 / NBRC 14742 / NCIMB 2012 / VKM B-1768 / DS2) (Halobacterium volcanii).